A 233-amino-acid chain; its full sequence is Beta-fibrinogenase brevinase (233 aa).

One can recognise a Peptidase S1 domain in the interval 1–224; the sequence is VIGGDECNIN…YIDWIQSIIA (224 aa). 6 disulfide bridges follow: cysteine 7-cysteine 138, cysteine 25-cysteine 41, cysteine 73-cysteine 231, cysteine 117-cysteine 185, cysteine 149-cysteine 164, and cysteine 175-cysteine 200. The active-site Charge relay system is the histidine 40. A glycan (N-linked (GlcNAc...) asparagine) is linked at asparagine 54. Residue aspartate 85 is the Charge relay system of the active site. A glycan (N-linked (GlcNAc...) asparagine) is linked at asparagine 129. Residues 176–178 carry the Cell attachment site motif; the sequence is RGD. Catalysis depends on serine 179, which acts as the Charge relay system. The N-linked (GlcNAc...) asparagine glycan is linked to asparagine 226.

Belongs to the peptidase S1 family. Snake venom subfamily. As to quaternary structure, heterodimer of the brevinase A chain and the brevinase B chain. In terms of tissue distribution, expressed by the venom gland.

It is found in the secreted. With respect to regulation, the fibrinolytic activity is completely inhibited by PMSF, diisopropylfluorophosphate (DFP), pefabloc, dithiothreitol (DTT) and Zn(2+), but not by Pepstatin A, E64, iodoacetate, chymostatin, tosyl-Lphenylalanine chloromethyl ketone (TPCK), soybean trypsin inhibitor (SBTI), phosphoramidon, Ca(2+), Co(2+), Cu(2+), Fe(2+), Mg(2+), Mn(2+), K(+), and Na(+). In terms of biological role, snake venom serine protease that has fibrinogenolytic activities. Preferentially cleaves the Bbeta-chain (FGB) and more slowly the Aa-chain (FGA) of fibrinogen, but does not affect the gamma-chain. Also has fibrinolytic activity. May play a role in antithrombotic reaction as well as thrombolytic reaction. In Gloydius blomhoffii (Mamushi), this protein is Beta-fibrinogenase brevinase.